The following is a 76-amino-acid chain: Nemertide alpha-1 (76 aa).

A signal peptide spans 1–28; the sequence is YRIASSSIAKMKTAVFLVGLLFLGLVFA. Residues 29-44 constitute a propeptide that is removed on maturation; that stretch reads DEAAIDSEFDQSIDKR. 3 disulfide bridges follow: C46-C60, C53-C64, and C59-C70. 4-hydroxyproline is present on residues P72 and P73.

The protein belongs to the nemertide family. In terms of tissue distribution, confined to the epidermis and to the mucus layer.

The protein resides in the secreted. Functionally, highly potent toxin against insect sodium channel (Nav) and with less potent activity against mammalian sodium channels. Potently inhibits inactivation of insect sodium channels of B.germanica (BgNav1) (EC(50)=8.6 nM), D.melanogaster (Dm Nav1), and arachnid sodium channel V.destructor (VdNav1). Also delays the inactivation of most mammalian Nav channels tested (human Nav1.1/SCN1A; EC(50)=124.1 nM, rat Nav1.2/SCN2A; EC(50)=359.6 nM, rat Nav1.3/SCN3A; EC(50)=135.4 nM, rat Nav1.4/SCN4A; EC(50)=145.5 nM, human Nav1.5/SCN5A; EC(50)=138.3 nM, mouse Nav1.6/SCN8A; EC(50)=240.4 nM, human Nav1.9/SCN9A; EC(50)=76.5 nM). 1 uM is enough to completely inhibits the inactivation, resulting in sustained non-inactivating currents. In addition, the toxin significantly enhances the recovery from inactivation, and the open state is not required for the toxin to interact with the channel. In vivo, injection into green crabs (Carcinus maenas at 1 mug/kg) of small doses (1-5 ug/kg) results in slow and fast permanent paralysis, whereas injection of high doses (more than 10 ug/kg) causes death. Injection into juvenile Blaptica dubia cockroaches results in death or permanent paralysis at doses higher than 7.1 ug/kg. Injection into brine shrimp (Artemia salina) stops movement or causes death after 24 hours (EC(50)=0.3 uM). In the rare inherited cardiac arrhythmia Brugada syndrome 1 (BRGDA1), this toxin is able to restore the loss of function by reducing channel inactivation, without affecting activation, by binding to Nav1.5/SCN5A. The polypeptide is Nemertide alpha-1 (Lineus lacteus (Ribbon worm)).